We begin with the raw amino-acid sequence, 410 residues long: DNA replication and repair protein RecF (410 aa).

30 to 37 contacts ATP; sequence GPNGHGKT.

Belongs to the RecF family.

The protein localises to the cytoplasm. Its function is as follows. The RecF protein is involved in DNA metabolism; it is required for DNA replication and normal SOS inducibility. RecF binds preferentially to single-stranded, linear DNA. It also seems to bind ATP. The protein is DNA replication and repair protein RecF of Rhodococcus opacus (strain B4).